Here is a 226-residue protein sequence, read N- to C-terminus: UPF0173 metal-dependent hydrolase CTN_1413 (226 aa).

Belongs to the UPF0173 family.

In Thermotoga neapolitana (strain ATCC 49049 / DSM 4359 / NBRC 107923 / NS-E), this protein is UPF0173 metal-dependent hydrolase CTN_1413.